The following is a 274-amino-acid chain: Glutamate racemase (274 aa).

Substrate contacts are provided by residues D9–S10 and Y41–G42. C73 functions as the Proton donor/acceptor in the catalytic mechanism. N74–T75 lines the substrate pocket. C183 (proton donor/acceptor) is an active-site residue. T184–H185 lines the substrate pocket.

This sequence belongs to the aspartate/glutamate racemases family.

The enzyme catalyses L-glutamate = D-glutamate. The protein operates within cell wall biogenesis; peptidoglycan biosynthesis. In terms of biological role, provides the (R)-glutamate required for cell wall biosynthesis. In Shewanella baltica (strain OS185), this protein is Glutamate racemase.